A 718-amino-acid polypeptide reads, in one-letter code: Serine/threonine-protein kinase PAK 5 (718 aa).

5 disordered regions span residues 1–29, 96–119, 226–245, 264–296, and 339–371; these read MFGK…DPQE, RSNS…IQGH, SPLD…TSRC, YDRR…QEPM, and VFSP…SSSH. A CRIB domain is found at 11 to 24; it reads ISGPSNFEHRVHTG. The tract at residues 25 to 447 is linker; that stretch reads FDPQEQKFTG…VVSPGDPREY (423 aa). The residue at position 104 (Ser-104) is a Phosphoserine. Thr-107 bears the Phosphothreonine mark. The span at 226–244 shows a compositional bias: polar residues; it reads SPLDYSFQLTPSRTAGTSR. The segment covering 359 to 371 has biased composition (low complexity); the sequence is QSQSKVGYSSSSH. Positions 448 to 699 constitute a Protein kinase domain; it reads LDNFIKIGEG…AQELLGHPFL (252 aa). Residues 454–462 and Lys-477 contribute to the ATP site; that span reads IGEGSTGIV. The active-site Proton acceptor is Asp-567.

Belongs to the protein kinase superfamily. STE Ser/Thr protein kinase family. STE20 subfamily. Interacts tightly with GTP-bound but not GDP-bound CDC42/p21 and RAC1. Interacts with MARK2, leading to inhibit MARK2 independently of kinase activity. Interacts with RHOD and RHOH. In terms of processing, autophosphorylated when activated by CDC42/p21.

It localises to the mitochondrion. It is found in the cytoplasm. The protein resides in the nucleus. The catalysed reaction is L-seryl-[protein] + ATP = O-phospho-L-seryl-[protein] + ADP + H(+). It carries out the reaction L-threonyl-[protein] + ATP = O-phospho-L-threonyl-[protein] + ADP + H(+). Functionally, serine/threonine protein kinase that plays a role in a variety of different signaling pathways including cytoskeleton regulation, cell migration, proliferation or cell survival. Activation by various effectors including growth factor receptors or active CDC42 and RAC1 results in a conformational change and a subsequent autophosphorylation on several serine and/or threonine residues. Phosphorylates the proto-oncogene RAF and stimulates its kinase activity. Promotes cell survival by phosphorylating the BCL2 antagonist of cell death BAD. Phosphorylates CTNND1, probably to regulate cytoskeletal organization and cell morphology. Keeps microtubules stable through MARK2 inhibition and destabilizes the F-actin network leading to the disappearance of stress fibers and focal adhesions. The polypeptide is Serine/threonine-protein kinase PAK 5 (Pak5) (Rattus norvegicus (Rat)).